A 7639-amino-acid chain; its full sequence is Nonribosomal peptide synthetase 4 (7639 aa).

The segment at 244–636 (WQGAMRPDAE…AGRKDAQIKF (393 aa)) is adenylation 1. Residues 776–852 (TFSNGTESQL…ALARHVKEIE (77 aa)) enclose the Carrier 1 domain. S813 is modified (O-(pantetheine 4'-phosphoryl)serine). Residues 865–1295 (FELSPIQRLY…EQNLSLLVES (431 aa)) are epimerization 1. The tract at residues 1337–1767 (VEDIYPCSPM…HLGPRHHQQI (431 aa)) is condensation 1. The segment at 1786 to 2181 (FEEQAILRPE…FGRKDTQVKL (396 aa)) is adenylation 2. A Carrier 2 domain is found at 2313-2389 (APASDMEKQL…DMAQSALPLS (77 aa)). S2350 carries the post-translational modification O-(pantetheine 4'-phosphoryl)serine. The tract at residues 2426 to 2852 (VEDIYPCTPL…LISTRDYQSL (427 aa)) is condensation 2. The segment at 2878–3269 (QPLDKLAVCA…QGRKDNQVKI (392 aa)) is adenylation 3. Residues 3403–3479 (REATETETKL…KLASFVQAVE (77 aa)) form the Carrier 3 domain. The residue at position 3440 (S3440) is an O-(pantetheine 4'-phosphoryl)serine. The tract at residues 3491-3928 (AFPLSPIQKL…RMTQAKAEPQ (438 aa)) is epimerization 2. The condensation 3 stretch occupies residues 3961–4389 (EAVYPCSPVQ…VSDDCAQQLT (429 aa)). The adenylation 4 stretch occupies residues 4407–4810 (FERNVQSLPH…VSRKDTQIKL (404 aa)). In terms of domain architecture, Carrier 4 spans 4944-5020 (APTTMMQRKL…EMATCCGHSE (77 aa)). At S4981 the chain carries O-(pantetheine 4'-phosphoryl)serine. A condensation 4 region spans residues 5058–5478 (QDLYPCSSLQ…QFCSEEDLQM (421 aa)). An adenylation 5 region spans residues 5498 to 5900 (FWQSVATYHD…IGRKDNQVKL (403 aa)). Positions 6039–6115 (TDTTFVGQLL…DLVTLIEKEG (77 aa)) constitute a Carrier 5 domain. S6076 is subject to O-(pantetheine 4'-phosphoryl)serine. Residues 6133–6567 (FALSPIQQLF…EVLGNMAMEL (435 aa)) are epimerization 3. The tract at residues 6607–7032 (VEDMYPCSPM…EALSHLRVSQ (426 aa)) is condensation 5. Residues 7088–7164 (RDKDQVYNKL…TLLNCLRDKS (77 aa)) form the Carrier 6 domain. An O-(pantetheine 4'-phosphoryl)serine modification is found at S7125. A condensation 6 region spans residues 7254 to 7603 (LDGEGPLDVA…SNTEVCFLYR (350 aa)).

This sequence belongs to the NRP synthetase family.

The enzyme catalyses D-allo-threonine + D-leucine + D-alanine + L-proline + 2 L-leucine + A = fusahexin + AH2 + 6 H2O. It functions in the pathway secondary metabolite biosynthesis. Its function is as follows. Nonribosomal peptide synthetase; part of the gene cluster that mediates the biosynthesis of the fusahexin, a cyclic hydrophobic hexapeptide with the amino acid sequence cyclo-(D-Ala-L-Leu-D-allo-Thr-L-Pro-D-Leu-L-Leu) that plays an important role in cell surface hydrophobicity. Fusahexin might also play a role in virulence, sensitivity to osmotic stress and oxidative stress. NRPS4 is the only enzyme within the cluster and its 5 catalytic modules are sufficient to produce fusahexin. The modules 1 to 4 incorporate respectively D-alanine, L-leucine, D-allo-threonine, and L-proline, which is supported by the presence of epimerase domains in modules 1 and 3, which incorporate D-amino acids. The terminal module is responsible for incorporation of the two adjacent leucine units, where the epimerase domain is only used to convert the first unit to D-leucine. The terminal condensation domain (Ct) is involved in cyclization with D-alanine and thereby releasing of fusahexin. This is Nonribosomal peptide synthetase 4 from Gibberella zeae (strain ATCC MYA-4620 / CBS 123657 / FGSC 9075 / NRRL 31084 / PH-1) (Wheat head blight fungus).